Reading from the N-terminus, the 168-residue chain is Endoribonuclease YbeY (168 aa).

The Zn(2+) site is built by His-126, His-130, and His-136.

This sequence belongs to the endoribonuclease YbeY family. Zn(2+) serves as cofactor.

The protein resides in the cytoplasm. Functionally, single strand-specific metallo-endoribonuclease involved in late-stage 70S ribosome quality control and in maturation of the 3' terminus of the 16S rRNA. This chain is Endoribonuclease YbeY, found in Sinorhizobium medicae (strain WSM419) (Ensifer medicae).